A 464-amino-acid polypeptide reads, in one-letter code: Fumarate hydratase class II (464 aa).

Substrate-binding positions include 97-99, 128-131, 138-140, and Thr-186; these read SGT, HPND, and SSN. Residue His-187 is the Proton donor/acceptor of the active site. Residue Ser-317 is part of the active site. Substrate-binding positions include Ser-318 and 323-325; that span reads KVN.

This sequence belongs to the class-II fumarase/aspartase family. Fumarase subfamily. As to quaternary structure, homotetramer.

The protein resides in the cytoplasm. The enzyme catalyses (S)-malate = fumarate + H2O. It functions in the pathway carbohydrate metabolism; tricarboxylic acid cycle; (S)-malate from fumarate: step 1/1. Functionally, involved in the TCA cycle. Catalyzes the stereospecific interconversion of fumarate to L-malate. The sequence is that of Fumarate hydratase class II from Leptospira interrogans serogroup Icterohaemorrhagiae serovar copenhageni (strain Fiocruz L1-130).